Reading from the N-terminus, the 75-residue chain is Small ribosomal subunit protein bS18 (75 aa).

This sequence belongs to the bacterial ribosomal protein bS18 family. Part of the 30S ribosomal subunit. Forms a tight heterodimer with protein bS6.

Functionally, binds as a heterodimer with protein bS6 to the central domain of the 16S rRNA, where it helps stabilize the platform of the 30S subunit. In Shewanella amazonensis (strain ATCC BAA-1098 / SB2B), this protein is Small ribosomal subunit protein bS18.